The sequence spans 100 residues: Small ribosomal subunit protein uS14c (100 aa).

This sequence belongs to the universal ribosomal protein uS14 family. Part of the 30S ribosomal subunit.

It is found in the plastid. Its subcellular location is the chloroplast. Functionally, binds 16S rRNA, required for the assembly of 30S particles. The polypeptide is Small ribosomal subunit protein uS14c (Cucumis sativus (Cucumber)).